The primary structure comprises 188 residues: Small ribosomal subunit protein eS8 (188 aa).

The disordered stretch occupies residues 1–34; the sequence is MGISRDSRHKRRLTGGRYPVHKKKRKYELGRPSS. Residues 7–26 show a composition bias toward basic residues; the sequence is SRHKRRLTGGRYPVHKKKRK.

The protein belongs to the eukaryotic ribosomal protein eS8 family.

This is Small ribosomal subunit protein eS8 (RPS8) from Theileria parva (East coast fever infection agent).